The chain runs to 860 residues: Leucine--tRNA ligase (860 aa).

The 'HIGH' region signature appears at 42–52 (PYPSGRLHMGH). Residues 619-623 (KMSKS) carry the 'KMSKS' region motif. ATP is bound at residue K622.

It belongs to the class-I aminoacyl-tRNA synthetase family.

The protein resides in the cytoplasm. It catalyses the reaction tRNA(Leu) + L-leucine + ATP = L-leucyl-tRNA(Leu) + AMP + diphosphate. The protein is Leucine--tRNA ligase of Yersinia pestis bv. Antiqua (strain Angola).